The chain runs to 645 residues: MDWSEGDGSHSHGHMGDSCHGHGGGHSHGHGHSHGGSGFGGFMPAGFHGQLVPGPMDPTQQPRKSSHPEDSSSWDIIKATQFGALERCKELVEAGYDVRQPDKENVTLLHWAAINNRADIVKYYISKGAVIDQLGGDLNSTPLHWAIRQGHLSMVIQLMRYGADPSLADGEGYRGLHLAVLFQNMPIAAYLMAKGQEVDLPDLNGQTPLMLAAQKIIGPEPTNFLIKCNASVNAVDKVNRNSPLHCAVLAGNVDSVHILLEAGASVDMQNDNGHTAIDLAQQVHSPLLIHMLSVVKTERIKANSACLKLLNRYKVCLQSVFSVVVVGAFGAILDMRTESWLLKGILLACIMAVINLASRQLATVAVRSLIPSTGLIASVFWMVVTWVLWFLPDEPSAAVQMLFTVNITAVLYYYIRSCRTDPGHVKATEEEKKKNIVVLAEAGCLDPRIFCTSCMMRKPMRANHCFSCNACVAKQDHHSIWINGCIGARNHPFFVLFLVALNFLCIWMFYGSITYWSRHCPLHYSEEGIWGALTALMGCSPWLLYVFCFVFFHTTWASILLVLQLYQIAFLGLTTSERANLMHRQRKLPQAVSLRQNPFNHGVVKNLVNFFQWRFCGLCKPMVLDWTQQHPMGLGRDMFSSPDAV.

Positions 1–73 are disordered; that stretch reads MDWSEGDGSH…KSSHPEDSSS (73 aa). The Cytoplasmic segment spans residues 1–314; that stretch reads MDWSEGDGSH…ACLKLLNRYK (314 aa). The segment covering 7–20 has biased composition (basic and acidic residues); it reads DGSHSHGHMGDSCH. Residues 23 to 33 are compositionally biased toward basic residues; the sequence is GGGHSHGHGHS. The segment covering 34–43 has biased composition (gly residues); the sequence is HGGSGFGGFM. ANK repeat units lie at residues 104-133, 138-167, 171-200, 204-234, and 239-268; these read ENVT…VIDQ, LNST…DPSL, EGYR…EVDL, NGQT…SVNA, and NRNS…SVDM. A helical transmembrane segment spans residues 315–335; the sequence is VCLQSVFSVVVVGAFGAILDM. Position 336 (Arg336) is a topological domain, lumenal. A helical membrane pass occupies residues 337–357; sequence TESWLLKGILLACIMAVINLA. Topologically, residues 358–369 are cytoplasmic; sequence SRQLATVAVRSL. The helical transmembrane segment at 370–390 threads the bilayer; that stretch reads IPSTGLIASVFWMVVTWVLWF. Topologically, residues 391–394 are lumenal; sequence LPDE. The chain crosses the membrane as a helical span at residues 395–415; that stretch reads PSAAVQMLFTVNITAVLYYYI. Topologically, residues 416-492 are cytoplasmic; sequence RSCRTDPGHV…NGCIGARNHP (77 aa). Residues 449-499 form the DHHC domain; the sequence is IFCTSCMMRKPMRANHCFSCNACVAKQDHHSIWINGCIGARNHPFFVLFLV. A helical transmembrane segment spans residues 493 to 513; it reads FFVLFLVALNFLCIWMFYGSI. Residues 514-542 are Lumenal-facing; the sequence is TYWSRHCPLHYSEEGIWGALTALMGCSPW. The chain crosses the membrane as a helical span at residues 543 to 563; it reads LLYVFCFVFFHTTWASILLVL. Topologically, residues 564-645 are cytoplasmic; sequence QLYQIAFLGL…RDMFSSPDAV (82 aa).

This sequence belongs to the DHHC palmitoyltransferase family. AKR/ZDHHC17 subfamily.

Its subcellular location is the golgi apparatus membrane. It is found in the cytoplasmic vesicle membrane. Functionally, putative palmitoyltransferase that could catalyze the addition of palmitate onto various protein substrates. This chain is Putative palmitoyltransferase ZDHHC13, found in Danio rerio (Zebrafish).